A 398-amino-acid chain; its full sequence is 1-deoxy-D-xylulose 5-phosphate reductoisomerase (398 aa).

Residues T10, G11, S12, I13, G36, K37, N38, and N124 each coordinate NADPH. K125 is a 1-deoxy-D-xylulose 5-phosphate binding site. Residue E126 coordinates NADPH. Mn(2+) is bound at residue D150. 1-deoxy-D-xylulose 5-phosphate is bound by residues S151, E152, S186, and H209. Mn(2+) is bound at residue E152. G215 is a binding site for NADPH. 1-deoxy-D-xylulose 5-phosphate contacts are provided by S222, N227, K228, and E231. E231 is a Mn(2+) binding site.

Belongs to the DXR family. In terms of assembly, homodimer. Mg(2+) is required as a cofactor. Mn(2+) serves as cofactor.

It carries out the reaction 2-C-methyl-D-erythritol 4-phosphate + NADP(+) = 1-deoxy-D-xylulose 5-phosphate + NADPH + H(+). It participates in isoprenoid biosynthesis; isopentenyl diphosphate biosynthesis via DXP pathway; isopentenyl diphosphate from 1-deoxy-D-xylulose 5-phosphate: step 1/6. In terms of biological role, catalyzes the NADPH-dependent rearrangement and reduction of 1-deoxy-D-xylulose-5-phosphate (DXP) to 2-C-methyl-D-erythritol 4-phosphate (MEP). The chain is 1-deoxy-D-xylulose 5-phosphate reductoisomerase from Salmonella paratyphi A (strain ATCC 9150 / SARB42).